The sequence spans 435 residues: Protein phosphatase 2C homolog 2 (435 aa).

One can recognise a PPM-type phosphatase domain in the interval 23 to 298 (IYGVSAMQGW…DNMTMIIIGL (276 aa)). Positions 71, 72, 240, and 289 each coordinate Mn(2+). The segment at 366–435 (DQTEEDRDLP…TSGAPEKSTS (70 aa)) is disordered. Basic and acidic residues predominate over residues 381–392 (ELPDSARNEREG). The segment covering 409 to 418 (GSSASTSEST) has biased composition (low complexity). Positions 419 to 435 (VTPAGSSTSGAPEKSTS) are enriched in polar residues.

It belongs to the PP2C family. Mg(2+) is required as a cofactor. The cofactor is Mn(2+).

It localises to the cytoplasm. The protein localises to the nucleus. It carries out the reaction O-phospho-L-seryl-[protein] + H2O = L-seryl-[protein] + phosphate. The catalysed reaction is O-phospho-L-threonyl-[protein] + H2O = L-threonyl-[protein] + phosphate. Dephosphorylating regulator for many key proteins. Dephosphorylates phosphoglycerate kinase pgk1 at least on 'Ser-203' to negatively regulate targeting of pgk1 to the mitochondrion, thereby negatively regulating production of acetyl-CoA and consequently aflatoxin biosynthesis. This is Protein phosphatase 2C homolog 2 from Aspergillus flavus (strain ATCC 200026 / FGSC A1120 / IAM 13836 / NRRL 3357 / JCM 12722 / SRRC 167).